The sequence spans 141 residues: Nucleoside triphosphatase NudI (141 aa).

Residues 1–141 (MRQRTIVCPL…RHTLALKGLL (141 aa)) form the Nudix hydrolase domain. Positions 38–59 (GGVEPGERIEEALRREIREELG) match the Nudix box motif.

The protein belongs to the Nudix hydrolase family. NudI subfamily. In terms of assembly, monomer. Mg(2+) serves as cofactor.

The catalysed reaction is a ribonucleoside 5'-triphosphate + H2O = a ribonucleoside 5'-phosphate + diphosphate + H(+). The enzyme catalyses a 2'-deoxyribonucleoside 5'-triphosphate + H2O = a 2'-deoxyribonucleoside 5'-phosphate + diphosphate + H(+). It catalyses the reaction dUTP + H2O = dUMP + diphosphate + H(+). It carries out the reaction dTTP + H2O = dTMP + diphosphate + H(+). The catalysed reaction is dCTP + H2O = dCMP + diphosphate + H(+). Its function is as follows. Catalyzes the hydrolysis of nucleoside triphosphates, with a preference for pyrimidine deoxynucleoside triphosphates (dUTP, dTTP and dCTP). This Salmonella newport (strain SL254) protein is Nucleoside triphosphatase NudI.